The following is a 486-amino-acid chain: Glutamyl-tRNA(Gln) amidotransferase subunit A (486 aa).

Active-site charge relay system residues include lysine 74 and serine 149. The active-site Acyl-ester intermediate is serine 173.

Belongs to the amidase family. GatA subfamily. In terms of assembly, heterotrimer of A, B and C subunits.

It carries out the reaction L-glutamyl-tRNA(Gln) + L-glutamine + ATP + H2O = L-glutaminyl-tRNA(Gln) + L-glutamate + ADP + phosphate + H(+). Its function is as follows. Allows the formation of correctly charged Gln-tRNA(Gln) through the transamidation of misacylated Glu-tRNA(Gln) in organisms which lack glutaminyl-tRNA synthetase. The reaction takes place in the presence of glutamine and ATP through an activated gamma-phospho-Glu-tRNA(Gln). This chain is Glutamyl-tRNA(Gln) amidotransferase subunit A, found in Prochlorococcus marinus (strain NATL2A).